A 559-amino-acid polypeptide reads, in one-letter code: Pentatricopeptide repeat-containing protein At4g38010 (559 aa).

12 PPR repeats span residues 70–104 (SSFSYNTLLSSYAVCDKPRVTIFAYKTFVSNGFSP), 105–139 (DMFTFPPVFKACGKFSGIREGKQIHGIVTKMGFYD), 140–170 (DIYVQNSLVHFYGVCGESRNACKVFGEMPVR), 171–201 (DVVSWTGIITGFTRTGLYKEALDTFSKMDVE), 203–233 (NLATYVCVLVSSGRVGCLSLGKGIHGLILKR), 238–268 (SLETGNALIDMYVKCEQLSDAMRVFGELEKK), 269–304 (DKVSWNSMISGLVHCERSKEAIDLFSLMQTSSGIKP), 305–339 (DGHILTSVLSACASLGAVDHGRWVHEYILTAGIKW), 340–370 (DTHIGTAIVDMYAKCGYIETALEIFNGIRSK), 371–405 (NVFTWNALLGGLAIHGHGLESLRYFEEMVKLGFKP), 406–440 (NLVTFLAALNACCHTGLVDEGRRYFHKMKSREYNL), and 443–473 (KLEHYGCMIDLLCRAGLLDEALELVKAMPVK). The type E motif stretch occupies residues 478–554 (ICGAILSACK…VPGSSYIEKF (77 aa)).

Belongs to the PPR family. PCMP-E subfamily.

The polypeptide is Pentatricopeptide repeat-containing protein At4g38010 (PCMP-E45) (Arabidopsis thaliana (Mouse-ear cress)).